The following is a 249-amino-acid chain: Imidazole glycerol phosphate synthase subunit HisF (249 aa).

Active-site residues include Asp-11 and Asp-130.

The protein belongs to the HisA/HisF family. As to quaternary structure, heterodimer of HisH and HisF.

Its subcellular location is the cytoplasm. It catalyses the reaction 5-[(5-phospho-1-deoxy-D-ribulos-1-ylimino)methylamino]-1-(5-phospho-beta-D-ribosyl)imidazole-4-carboxamide + L-glutamine = D-erythro-1-(imidazol-4-yl)glycerol 3-phosphate + 5-amino-1-(5-phospho-beta-D-ribosyl)imidazole-4-carboxamide + L-glutamate + H(+). It functions in the pathway amino-acid biosynthesis; L-histidine biosynthesis; L-histidine from 5-phospho-alpha-D-ribose 1-diphosphate: step 5/9. IGPS catalyzes the conversion of PRFAR and glutamine to IGP, AICAR and glutamate. The HisF subunit catalyzes the cyclization activity that produces IGP and AICAR from PRFAR using the ammonia provided by the HisH subunit. This Sulfolobus acidocaldarius (strain ATCC 33909 / DSM 639 / JCM 8929 / NBRC 15157 / NCIMB 11770) protein is Imidazole glycerol phosphate synthase subunit HisF.